A 93-amino-acid chain; its full sequence is Small ribosomal subunit protein uS19 (93 aa).

It belongs to the universal ribosomal protein uS19 family.

Its function is as follows. Protein S19 forms a complex with S13 that binds strongly to the 16S ribosomal RNA. This chain is Small ribosomal subunit protein uS19, found in Synechococcus sp. (strain JA-3-3Ab) (Cyanobacteria bacterium Yellowstone A-Prime).